We begin with the raw amino-acid sequence, 217 residues long: Ribonuclease HII (217 aa).

Positions S27–C216 constitute an RNase H type-2 domain. Residues D33, E34, and D126 each contribute to the a divalent metal cation site.

It belongs to the RNase HII family. Requires Mn(2+) as cofactor. Mg(2+) is required as a cofactor.

It is found in the cytoplasm. It catalyses the reaction Endonucleolytic cleavage to 5'-phosphomonoester.. Its function is as follows. Endonuclease that specifically degrades the RNA of RNA-DNA hybrids. The polypeptide is Ribonuclease HII (rnhB) (Chlamydia trachomatis serovar D (strain ATCC VR-885 / DSM 19411 / UW-3/Cx)).